Reading from the N-terminus, the 674-residue chain is L-type lectin-domain containing receptor kinase IV.3 (674 aa).

An N-terminal signal peptide occupies residues 1–22 (MFFKLFTIFFFFIILLSKPLNS). N-linked (GlcNAc...) asparagine glycosylation is found at Asn-21, Asn-28, Asn-40, Asn-81, Asn-136, and Asn-188. Topologically, residues 23–296 (SSQSLNFTYN…TSLQRFYKNR (274 aa)) are extracellular. Residues 26–263 (SLNFTYNSFH…SEHFVFGWSF (238 aa)) form a legume-lectin like region. A helical membrane pass occupies residues 297–317 (MPLFSLLLIPVLFVVSLIFLV). At 318-674 (RFIVRRRRKF…IAYSIVSGGR (357 aa)) the chain is on the cytoplasmic side. The Protein kinase domain maps to 355–632 (FKDKDLLGSG…LQYLRGDATL (278 aa)). ATP is bound by residues 361–369 (LGSGGFGRV) and Lys-384. The Proton acceptor role is filled by Asp-480.

In the C-terminal section; belongs to the protein kinase superfamily. Ser/Thr protein kinase family. It in the N-terminal section; belongs to the leguminous lectin family.

The protein resides in the cell membrane. The catalysed reaction is L-seryl-[protein] + ATP = O-phospho-L-seryl-[protein] + ADP + H(+). It carries out the reaction L-threonyl-[protein] + ATP = O-phospho-L-threonyl-[protein] + ADP + H(+). The sequence is that of L-type lectin-domain containing receptor kinase IV.3 (LECRK43) from Arabidopsis thaliana (Mouse-ear cress).